A 316-amino-acid chain; its full sequence is MGKTLIFIKLSSLNECIKYSTIISKIARELSIHKGNELYIWVSCSEMCQKRTKHLFRELQNALCELYLSSATTNDSSLLSVVPTIVLFEYWSNIQLGSITDSWNSVYYSENAKDQILNIPAKSFQSIGPDVLNEIHNIEHLPKKDESEDSGKEINNMVSAVGGTFDHLHVGHKVLLTLTAWFGVKEVIVGVSGDELLKKKVQKEFLENIQKRKEEVSNFLHSIKEDINCRVVTIHDPFGPTITDAEIDSLIVSEETKTGATAVQEERVKRGLPELSIYCIDLLYPAQELNLKDNNSLKVSSTAIREELAKLAYKNK.

The protein to yeast YGR277c.

This is an uncharacterized protein from Schizosaccharomyces pombe (strain 972 / ATCC 24843) (Fission yeast).